The following is a 2542-amino-acid chain: Probable polyketide synthase 41 (2542 aa).

The Ketosynthase family 3 (KS3) domain maps to 11–441 (CNKVAIIGIG…GSNCCLIVSS (431 aa)). Active-site for beta-ketoacyl synthase activity residues include C177, H318, and H360. The tract at residues 628–661 (GIKPSIIVGHSLGEISSSYCSGMIDLDTFCYLIY) is acyl/malonyl transferase. S638 acts as the For acyl/malonyl transferase activity in catalysis. An N-terminal hotdog fold region spans residues 926–1059 (INHLGISNSN…ANFQLFSRGP (134 aa)). The PKS/mFAS DH domain occupies 926–1231 (INHLGISNSN…FKSTTKIKDP (306 aa)). Catalysis depends on H959, which acts as the Proton acceptor; for dehydratase activity. Positions 1083-1231 (NLTKLSKQEL…FKSTTKIKDP (149 aa)) are C-terminal hotdog fold. The Proton donor; for dehydratase activity role is filled by D1145. One can recognise a Carrier domain in the interval 2459-2537 (NVELTVDQLI…SFIQLVKNSM (79 aa)). At S2496 the chain carries O-(pantetheine 4'-phosphoryl)serine.

Pantetheine 4'-phosphate is required as a cofactor.

Functionally, probable polyketide synthase. The protein is Probable polyketide synthase 41 (pks41) of Dictyostelium discoideum (Social amoeba).